The sequence spans 122 residues: UPF0344 protein BPUM_1008 (122 aa).

The next 4 membrane-spanning stretches (helical) occupy residues 5–25 (LHITAWVLGIILFFVAFALAG), 33–53 (IVHMIVRLLYLIIIATGVELY), 60–80 (IPGFGGEYIGKMILGILVIGF), and 93–113 (SVTGVLIGFIIFAIVTILLGL).

Belongs to the UPF0344 family.

The protein resides in the cell membrane. This Bacillus pumilus (strain SAFR-032) protein is UPF0344 protein BPUM_1008.